Reading from the N-terminus, the 227-residue chain is Protein FdhD (227 aa).

210–215 (FARNGK) is a binding site for Mo-bis(molybdopterin guanine dinucleotide).

The protein belongs to the FdhD family.

Its subcellular location is the cytoplasm. Required for formate dehydrogenase (FDH) activity. This Methanocaldococcus jannaschii (strain ATCC 43067 / DSM 2661 / JAL-1 / JCM 10045 / NBRC 100440) (Methanococcus jannaschii) protein is Protein FdhD.